Reading from the N-terminus, the 2439-residue chain is MVQRWLLLSCCGALLSAGLANTSYTSPGLQRLKDSPQTAPDKGQCSTWGAGHFSTFDHHVYDFSGTCNYIFAATCKDAFPTFSVQLRRGPDGSISRIIVELGASVVTVSEAIISVKDIGVISLPYTSNGLQITPFGQSVRLVAKQLELELEVVWGPDSHLMVLVERKYMGQMCGLCGNFDGKVTNEFVSEEGKFLEPHKFAALQKLDDPGEICTFQDIPSTHVRQAQHARICTQLLTLVAPECSVSKEPFVLSCQADVAAAPQPGPQNSSCATLSEYSRQCSMVGQPVRRWRSPGLCSVGQCPANQVYQECGSACVKTCSNPQHSCSSSCTFGCFCPEGTVLNDLSNNHTCVPVTQCPCVLHGAMYAPGEVTIAACQTCRCTLGRWVCTERPCPGHCSLEGGSFVTTFDARPYRFHGTCTYILLQSPQLPEDGALMAVYDKSGVSHSETSLVAVVYLSRQDKIVISQDEVVTNNGEAKWLPYKTRNITVFRQTSTHLQMATSFGLELVVQLRPIFQAYVTVGPQFRGQTRGLCGNFNGDTTDDFTTSMGIAEGTASLFVDSWRAGNCPAALERETDPCSMSQLNKVCAETHCSMLLRTGTVFERCHATVNPAPFYKRCVYQACNYEETFPHICAALGDYVHACSLRGVLLWGWRSSVDNCTIPCTGNTTFSYNSQACERTCLSLSDRATECHHSAVPVDGCNCPDGTYLNQKGECVRKAQCPCILEGYKFILAEQSTVINGITCHCINGRLSCPQRPQMFLASCQAPKTFKSCSQSSENKFGAACAPTCQMLATGVACVPTKCEPGCVCAEGLYENADGQCVPPEECPCEFSGVSYPGGAELHTDCRTCSCSRGRWACQQGTHCPSTCTLYGEGHVITFDGQRFVFDGNCEYILATDVCGVNDSQPTFKILTENVICGNSGVTCSRAIKIFLGGLSVVLADRNYTVTGEEPHVQLGVTPGALSLVVDISIPGRYNLTLIWNRHMTILIRIARASQDPLCGLCGNFNGNMKDDFETRSRYVASSELELVNSWKESPLCGDVSFVTDPCSLNAFRRSWAERKCSVINSQTFATCHSKVYHLPYYEACVRDACGCDSGGDCECLCDAVAAYAQACLDKGVCVDWRTPAFCPIYCGFYNTHTQDGHGEYQYTQEANCTWHYQPCLCPSQPQSVPGSNIEGCYNCSQDEYFDHEEGVCVPCMPPTTPQPPTTPQLPTTGSRPTQVWPMTGTSTTIGLLSSTGPSPSSNHTPASPTQTPLLPATLTSSKPTASSGEPPRPTTAVTPQATSGLPPTATLRSTATKPTVTQATTRATASTASPATTSTAQSTTRTTMTLPTPATSGTSPTLPKSTNQELPGTTATQTTGPRPTPASTTGPTTPQPGQPTRPTATETTQTRTTTEYTTPQTPHTTHSPPTAGSPVPSTGPVTATSFHATTTYPTPSHPETTLPTHVPPFSTSLVTPSTHTVITPTHAQMATSASNHSAPTGTIPPPTTLKATGSTHTAPPITPTTSGTSQAHSSFSTNKTPTSLHSHTSSTHHPEVTPTSTTTITPNPTSTRTRTPVAHTNSATSSRPPPPFTTHSPPTGSSPFSSTGPMTATSFKTTTTYPTPSHPQTTLPTHVPPFSTSLVTPSTHTVITPTHAQMATSASIHSMPTGTIPPPTTLKATGSTHTAPTMTLTTSGTSQALSSLNTAKTSTSLHSHTSSTHHAEATSTSTTNITPNPTSTGTPPMTVTTSGTSQSRSSFSTAKTSTSLHSHTSSTHHPEVTSTSTTSITPNHTSTGTRTPVAHTTSATSSRLPTPFTTHSPPTGTTPISSTGPVTATSFQTTTTYPTPSHPHTTLPTHVPSFSTSLVTPSTHTVIIPTHTQMATSASIHSMPTGTIPPPTTIKATGSTHTAPPMTPTTSGTSQSPSSFSTAKTSTSLPYHTSSTHHPEVTPTSTTNITPKHTSTGTRTPVAHTTSASSSRLPTPFTTHSPPTGSSPFSSTGPMTATSFQTTTTYPTPSHPQTTLPTHVPPFSTSLVTPSTHTVIITTHTQMATSASIHSTPTGTVPPPTTLKATGSTHTAPPMTVTTSGTSQTHSSFSTATASSSFISSSSWLPQNSSSRPPSSPITTQLPHLSSATTPVSTTNQLSSSFSPSPSAPSTVSSYVPSSHSSPQTSSPSVGTSSSFVSAPVHSTTLSSGSHSSLSTHPTTASVSASPLFPSSPAASTTIRATLPHTISSPFTLSALLPISTVTVSPTPSSHLASSTIAFPSTPRTTASTHTAPAFSSQSTTSRSTSLTTRVPTSGFVSLTSGVTGIPTSPVTNLTTRHPGPTLSPTTRFLTSSLTAHGSTPASAPVSSLGTPTPTSPGVCSVREQQEEITFKGCMANVTVTRCEGACISAASFNIITQQVDARCSCCRPLHSYEQQLELPCPDPSTPGRRLVLTLQVFSHCVCSSVACGD.

A signal peptide spans 1-22; it reads MVQRWLLLSCCGALLSAGLANT. The VWFD 1 domain occupies 43-214; sequence GQCSTWGAGH…KLDDPGEICT (172 aa). 2 disulfides stabilise this stretch: C45-C176 and C67-C213. N268 carries an N-linked (GlcNAc...) asparagine glycan. Positions 302–357 constitute a TIL domain; that stretch reads CPANQVYQECGSACVKTCSNPQHSCSSSCTFGCFCPEGTVLNDLSNNHTCVPVTQC. The region spanning 395–579 is the VWFD 2 domain; that stretch reads GHCSLEGGSF…ALERETDPCS (185 aa). 2 disulfides stabilise this stretch: C397–C533 and C419–C578. N-linked (GlcNAc...) asparagine glycosylation is found at N486 and N659. Residues 866–1038 enclose the VWFD 3 domain; that stretch reads STCTLYGEGH…NSWKESPLCG (173 aa). Disulfide bonds link C868–C1002, C890–C1037, C899–C999, and C917–C924. N-linked (GlcNAc...) asparagine glycosylation is found at N975 and N1179. 8 disordered regions span residues 1202 to 1455, 1471 to 1626, 1642 to 1834, 1868 to 1983, 2033 to 2077, 2090 to 2196, 2233 to 2278, and 2323 to 2348; these read PQPP…TSLV, ATSA…LVTP, SASI…HPHT, SIHS…STGP, ATSA…THSS, SSSW…SASP, VSPT…SLTT, and LTAH…SPGV. Positions 1224 to 1265 are enriched in low complexity; sequence TGTSTTIGLLSSTGPSPSSNHTPASPTQTPLLPATLTSSKPT. The span at 1276–1286 shows a compositional bias: polar residues; that stretch reads TAVTPQATSGL. Residues 1294-1339 show a composition bias toward low complexity; it reads STATKPTVTQATTRATASTASPATTSTAQSTTRTTMTLPTPATSGT. A compositionally biased stretch (polar residues) spans 1340–1351; it reads SPTLPKSTNQEL. 2 stretches are compositionally biased toward low complexity: residues 1352–1373 and 1381–1415; these read PGTT…TGPT and TRPT…AGSP. Composition is skewed to polar residues over residues 1416 to 1455, 1471 to 1481, and 1490 to 1520; these read VPST…TSLV, ATSASNHSAPT, and LKAT…STNK. 2 stretches are compositionally biased toward low complexity: residues 1521-1567 and 1574-1611; these read TPTS…ATSS and TTHS…PQTT. A 1; truncated repeat occupies 1561 to 1738; it reads TNSATSSRPP…TTSGTSQSRS (178 aa). The tract at residues 1607–1953 is approximate repeats; that stretch reads HPQTTLPTHV…STGTRTPVAH (347 aa). Residues 1659–1686 show a composition bias toward polar residues; it reads LKATGSTHTAPTMTLTTSGTSQALSSLN. Residues 1687-1768 are compositionally biased toward low complexity; that stretch reads TAKTSTSLHS…PEVTSTSTTS (82 aa). A compositionally biased stretch (polar residues) spans 1769–1793; it reads ITPNHTSTGTRTPVAHTTSATSSRL. Residues 1785 to 1953 form repeat 2; it reads TTSATSSRLP…STGTRTPVAH (169 aa). Low complexity-rich tracts occupy residues 1794–1834 and 1891–1917; these read PTPF…HPHT and TAPP…TSTS. Over residues 1918 to 1962 the composition is skewed to polar residues; it reads LPYHTSSTHHPEVTPTSTTNITPKHTSTGTRTPVAHTTSASSSRL. The span at 1963–1983 shows a compositional bias: low complexity; sequence PTPFTTHSPPTGSSPFSSTGP. The span at 2052–2070 shows a compositional bias: polar residues; the sequence is LKATGSTHTAPPMTVTTSG. Residues 2090–2102 are compositionally biased toward low complexity; that stretch reads SSSWLPQNSSSRP. Residues 2107-2120 are compositionally biased toward polar residues; that stretch reads ITTQLPHLSSATTP. Residues 2121-2196 show a composition bias toward low complexity; sequence VSTTNQLSSS…PTTASVSASP (76 aa). The span at 2240-2264 shows a compositional bias: polar residues; sequence HLASSTIAFPSTPRTTASTHTAPAF. Residues 2265 to 2278 are compositionally biased toward low complexity; the sequence is SSQSTTSRSTSLTT. Residues 2323–2347 are compositionally biased toward polar residues; it reads LTAHGSTPASAPVSSLGTPTPTSPG. Cystine bridges form between C2349/C2396, C2363/C2410, C2372/C2430, and C2376/C2432. In terms of domain architecture, CTCK spans 2349–2438; it reads CSVREQQEEI…HCVCSSVACG (90 aa).

As to quaternary structure, multimer; disulfide-linked. O-glycosylated. Expressed in the regenerative zone of gastric antrum, gastric body mucosa and gastric incisura mucosa. Expressed in the deeper mucous glands of gastric antrum. Overexpressed in Helicobacter pylori infected gastric epithelium. Highly expressed in duodenal Brunner's glands, gall bladder, seminal vesicle, pancreatic centroacinar cells and ducts, and periductal glands of the common bile duct.

Its subcellular location is the secreted. May provide a mechanism for modulation of the composition of the protective mucus layer related to acid secretion or the presence of bacteria and noxious agents in the lumen. Plays an important role in the cytoprotection of epithelial surfaces and are used as tumor markers in a variety of cancers. May play a role in epithelial organogenesis. This Homo sapiens (Human) protein is Mucin-6 (MUC6).